We begin with the raw amino-acid sequence, 173 residues long: Co-chaperone protein HscB homolog (173 aa).

The region spanning 2-74 (NYFELFSLSP…ISRAEHMLSL (73 aa)) is the J domain.

Belongs to the HscB family. In terms of assembly, interacts with HscA and stimulates its ATPase activity.

Its function is as follows. Co-chaperone involved in the maturation of iron-sulfur cluster-containing proteins. Seems to help targeting proteins to be folded toward HscA. This is Co-chaperone protein HscB homolog from Shewanella loihica (strain ATCC BAA-1088 / PV-4).